We begin with the raw amino-acid sequence, 320 residues long: Nicotianamine synthase 3 (320 aa).

The protein belongs to the nicotianamine synthase (NAS)-like family. In shoots.

It catalyses the reaction 3 S-adenosyl-L-methionine = nicotianamine + 3 S-methyl-5'-thioadenosine + 3 H(+). In terms of biological role, synthesizes nicotianamine, a polyamine which serves as a sensor for the physiological iron status within the plant, and/or might be involved in the transport of iron. In Arabidopsis thaliana (Mouse-ear cress), this protein is Nicotianamine synthase 3 (NAS3).